Reading from the N-terminus, the 198-residue chain is Probable septum site-determining protein MinC (198 aa).

This sequence belongs to the MinC family. In terms of assembly, interacts with MinD and FtsZ.

Cell division inhibitor that blocks the formation of polar Z ring septums. Rapidly oscillates between the poles of the cell to destabilize FtsZ filaments that have formed before they mature into polar Z rings. Prevents FtsZ polymerization. This is Probable septum site-determining protein MinC from Thermosipho melanesiensis (strain DSM 12029 / CIP 104789 / BI429).